The sequence spans 233 residues: 2-C-methyl-D-erythritol 4-phosphate cytidylyltransferase (233 aa).

It belongs to the IspD/TarI cytidylyltransferase family. IspD subfamily.

It carries out the reaction 2-C-methyl-D-erythritol 4-phosphate + CTP + H(+) = 4-CDP-2-C-methyl-D-erythritol + diphosphate. Its pathway is isoprenoid biosynthesis; isopentenyl diphosphate biosynthesis via DXP pathway; isopentenyl diphosphate from 1-deoxy-D-xylulose 5-phosphate: step 2/6. Functionally, catalyzes the formation of 4-diphosphocytidyl-2-C-methyl-D-erythritol from CTP and 2-C-methyl-D-erythritol 4-phosphate (MEP). This is 2-C-methyl-D-erythritol 4-phosphate cytidylyltransferase from Vibrio atlanticus (strain LGP32) (Vibrio splendidus (strain Mel32)).